The primary structure comprises 262 residues: Proenkephalin-A-A (262 aa).

A signal peptide spans 1-24; that stretch reads MGLEARHCCMFLLVFASLSVEIRA. 3 disulfides stabilise this stretch: Cys-26–Cys-48, Cys-30–Cys-52, and Cys-33–Cys-65. 5 propeptides span residues 110–131, 139–177, 190–201, 211–221, and 229–253; these read MDEL…LAKN, EYDS…GEIN, STDLEDETSGIQ, VGRPEWWEDYQ, and TRFT…PDME.

Belongs to the opioid neuropeptide precursor family. The N-terminal domain contains 6 conserved cysteines thought to be involved in disulfide bonding and/or processing.

The protein localises to the secreted. Enkephalin neuropeptides compete with and mimic the effects of opiate drugs. They play a role in a number of physiologic functions, including pain perception and responses to stress. The protein is Proenkephalin-A-A (penk-a) of Xenopus laevis (African clawed frog).